The primary structure comprises 557 residues: Formate--tetrahydrofolate ligase (557 aa).

Position 65 to 72 (65 to 72) interacts with ATP; it reads TPAGEGKT.

Belongs to the formate--tetrahydrofolate ligase family.

It carries out the reaction (6S)-5,6,7,8-tetrahydrofolate + formate + ATP = (6R)-10-formyltetrahydrofolate + ADP + phosphate. Its pathway is one-carbon metabolism; tetrahydrofolate interconversion. The protein is Formate--tetrahydrofolate ligase of Methylorubrum populi (strain ATCC BAA-705 / NCIMB 13946 / BJ001) (Methylobacterium populi).